The chain runs to 193 residues: Auxin-responsive protein IAA23 (193 aa).

Residues 1 to 12 are compositionally biased toward polar residues; the sequence is MSTSSGADSSPP. Positions 1 to 66 are disordered; that stretch reads MSTSSGADSS…SPKARAVGWP (66 aa). Over residues 21-36 the composition is skewed to low complexity; sequence TALTLALPGSSSSSSS. The EAR-like (transcriptional repression) motif lies at 23 to 27; sequence LTLAL. The segment covering 39–53 has biased composition (basic and acidic residues); that stretch reads DPERKRAAHADHADA. The PB1 domain maps to 83 to 191; that stretch reads AKLVKVAVDG…EAVNLSPRRS (109 aa).

This sequence belongs to the Aux/IAA family. Homodimers and heterodimers. As to expression, highly expressed in roots. Expressed in seedlings.

It localises to the nucleus. Functionally, aux/IAA proteins are short-lived transcriptional factors that function as repressors of early auxin response genes at low auxin concentrations. The polypeptide is Auxin-responsive protein IAA23 (IAA23) (Oryza sativa subsp. japonica (Rice)).